A 55-amino-acid polypeptide reads, in one-letter code: Ferredoxin (55 aa).

4Fe-4S ferredoxin-type domains follow at residues 2–27 and 28–55; these read HIIT…HEGT and GKYE…VKAE. Positions 8, 11, 14, 18, 37, 40, 43, and 47 each coordinate [4Fe-4S] cluster.

It depends on [4Fe-4S] cluster as a cofactor.

Its function is as follows. Ferredoxins are iron-sulfur proteins that transfer electrons in a wide variety of metabolic reactions. The chain is Ferredoxin from Thermoanaerobacterium thermosaccharolyticum (Clostridium thermosaccharolyticum).